The sequence spans 1486 residues: MIERGKFRSLTLINWNGFFARTFDLDELVTTLSGGNGAGKSTTMAAFVTALIPDLTLLHFRNTTEAGATSGSRDKGLHGKLKAGVCYSMLDTINSHHQRVVVGVRLQQVAGRDRKVDIKPFAIQGLPMSVQPTQLVTETLNERQARVLPLNELKDKLEAMEGVQFKQFNSITDYHSLMFDLGIIARRLRSASDRSKFYRLIEASLYGGISSAITRSLRDYLLPENSGVRKAFQDMEAALRENRMTLEAIRVTQSDRDLFKHLISEATNYVAADYMRHANERRVHLDKALEFRRELHTSRKQLAAEQYKHVDMARELAEHNGAEGDLEADYQAASDHLNLVQTALRQQEKIERYEADLDELQIRLEEQNEVVAEAIERQEENEARAEAAELEVDELKSQLADYQQALDVQQTRAIQYNQAIAALNRAKELCHLPDLTADSAAEWLETFQAKELEATEKMLSLEQKMSMAQTAHSQFEQAYQLVVAINGPLARNEAWDVARELLREGVDQRHLAEQVQPLRMRLSELEQRLREQQEAERLLADFCKRQGKNFDIDELEALHQELEARIASLSDSVSNAREERMALRQEQEQLQSRIQSLMQRAPVWLAAQNSLNQLSEQCGEEFTSSQDVTEFLQQLLEREREAIVERDEVGARKNAVDEEIERLSQPGGSEDQRLNALAERFGGVLLSEIYDDVSLEDAPYFSALYGPSRHAIVVPDLSQVTEHLEGLTDCPEDLYLIEGDPQSFDDSVFSVDELEKAVVVKIADRQWRYSRFPEVPLFGRAARESRIESLHAEREVLSERFATLSFDVQKTQRLHQAFSRFIGSHLAVAFESDPEAEIRQLNSRRVELERALSNHENDNQQQRIQFEQAKEGVTALNRILPRLNLLADDSLADRVDEIRERLDEAQEAARFVQQFGNQLAKLEPIVSVLQSDPEQFEQLKEDYAYSQQMQRDARQQAFALTEVVQRRAHFSYSDSAEMLSGNSDLNEKLRERLEQAEAERTRAREALRGHAAQLNQYNQVLASLKSSYDTKKELLNDLQRELQDIGVRADSGAEERARIRRDELHAQLSNNRSRRNQLEKALTFCEAEMDNLTRKLRKLERDYFEMREQVVTAKAGWCAVMRMVKDNGVERRLHRRELAYLSADDLRSMSDKALGALRLAVADNEHLRDVLRMSEDPKRPERKIQFFVAVYQHLRERIRQDIIRTDDPVEAIEQMEIELSRLTEELTSREQKLAISSRSVANIIRKTIQREQNRIRMLNQGLQNVSFGQVNSVRLNVNVRETHAMLLDVLSEQHEQHQDLFNSNRLTFSEALAKLYQRLNPQIDMGQRTPQTIGEELLDYRNYLEMEVEVNRGSDGWLRAESGALSTGEAIGTGMSILVMVVQSWEDESRRLRGKDISPCRLLFLDEAARLDARSIATLFELCERLQMQLIIAAPENISPEKGTTYKLVRKVFQNTEHVHVVGLRGFAPQLPETLPGSDEAPSQAS.

34–41 serves as a coordination point for ATP; it reads GGNGAGKS. 3 coiled-coil regions span residues 326-418, 444-480, and 509-603; these read LEAD…QYNQ, LETF…QAYQ, and RHLA…RAPV. The segment at 666-783 is flexible hinge; the sequence is PGGSEDQRLN…EVPLFGRAAR (118 aa). Coiled-coil stretches lie at residues 835 to 923, 977 to 1115, and 1209 to 1266; these read EAEI…AKLE, EMLS…TAKA, and VEAI…QNVS.

Belongs to the SMC family. MukB subfamily. As to quaternary structure, homodimerization via its hinge domain. Binds to DNA via its C-terminal region. Interacts, and probably forms a ternary complex, with MukE and MukF via its C-terminal region. The complex formation is stimulated by calcium or magnesium. Interacts with tubulin-related protein FtsZ.

The protein resides in the cytoplasm. Its subcellular location is the nucleoid. Functionally, plays a central role in chromosome condensation, segregation and cell cycle progression. Functions as a homodimer, which is essential for chromosome partition. Involved in negative DNA supercoiling in vivo, and by this means organize and compact chromosomes. May achieve or facilitate chromosome segregation by condensation DNA from both sides of a centrally located replisome during cell division. The protein is Chromosome partition protein MukB of Escherichia coli O1:K1 / APEC.